The primary structure comprises 299 residues: Protein sprouty homolog 4 (299 aa).

At Met-1 the chain carries N-acetylmethionine. Disordered stretches follow at residues 55–79 (NPSLALTTGPKRTRGGAPELAPTPA) and 92–126 (FSGRPSSVSSSSSTSSDQRLLDHMAPPPVADQASP). Residues 92 to 107 (FSGRPSSVSSSSSTSS) show a composition bias toward low complexity. Ser-125 carries the post-translational modification Phosphoserine. The SPR domain maps to 166–273 (KCKECASPRT…GYDRLRRPGC (108 aa)). The tract at residues 181-299 (VCNQECLCSA…AKTSRPDKPF (119 aa)) is required for interaction with TESK1. Required for colocalization with TESK1 at vesicular spots in the cytoplasm and inhibition of TESK1 kinase activity, resulting in inhibition of cell spreading.

The protein belongs to the sprouty family. As to quaternary structure, interacts (via C-terminus) with TESK1 (via both C- and N-termini); the interaction inhibits TESK1 kinase activity. Interacts with RAF1. Interacts with CAV1 (via C-terminus).

Its subcellular location is the cytoplasm. The protein resides in the cell projection. It is found in the ruffle membrane. Functionally, suppresses the insulin receptor and EGFR-transduced MAPK signaling pathway, but does not inhibit MAPK activation by a constitutively active mutant Ras. Probably impairs the formation of GTP-Ras. Inhibits Ras-independent, but not Ras-dependent, activation of RAF1. Represses integrin-mediated cell spreading via inhibition of TESK1-mediated phosphorylation of cofilin. This is Protein sprouty homolog 4 (SPRY4) from Homo sapiens (Human).